The sequence spans 335 residues: 4-hydroxy-3-methylbut-2-enyl diphosphate reductase 2 (335 aa).

Cys37 lines the [4Fe-4S] cluster pocket. Residues His66 and His99 each contribute to the (2E)-4-hydroxy-3-methylbut-2-enyl diphosphate site. Residues His66 and His99 each contribute to the dimethylallyl diphosphate site. Isopentenyl diphosphate contacts are provided by His66 and His99. Cys121 contacts [4Fe-4S] cluster. His149 contacts (2E)-4-hydroxy-3-methylbut-2-enyl diphosphate. His149 is a dimethylallyl diphosphate binding site. Residue His149 participates in isopentenyl diphosphate binding. The active-site Proton donor is Glu151. Thr189 provides a ligand contact to (2E)-4-hydroxy-3-methylbut-2-enyl diphosphate. Cys219 serves as a coordination point for [4Fe-4S] cluster. 4 residues coordinate (2E)-4-hydroxy-3-methylbut-2-enyl diphosphate: Ser247, Ser248, Asn249, and Ser292. Residues Ser247, Ser248, Asn249, and Ser292 each contribute to the dimethylallyl diphosphate site. Positions 247, 248, 249, and 292 each coordinate isopentenyl diphosphate.

The protein belongs to the IspH family. It depends on [4Fe-4S] cluster as a cofactor.

The catalysed reaction is isopentenyl diphosphate + 2 oxidized [2Fe-2S]-[ferredoxin] + H2O = (2E)-4-hydroxy-3-methylbut-2-enyl diphosphate + 2 reduced [2Fe-2S]-[ferredoxin] + 2 H(+). It catalyses the reaction dimethylallyl diphosphate + 2 oxidized [2Fe-2S]-[ferredoxin] + H2O = (2E)-4-hydroxy-3-methylbut-2-enyl diphosphate + 2 reduced [2Fe-2S]-[ferredoxin] + 2 H(+). The protein operates within isoprenoid biosynthesis; dimethylallyl diphosphate biosynthesis; dimethylallyl diphosphate from (2E)-4-hydroxy-3-methylbutenyl diphosphate: step 1/1. It functions in the pathway isoprenoid biosynthesis; isopentenyl diphosphate biosynthesis via DXP pathway; isopentenyl diphosphate from 1-deoxy-D-xylulose 5-phosphate: step 6/6. In terms of biological role, catalyzes the conversion of 1-hydroxy-2-methyl-2-(E)-butenyl 4-diphosphate (HMBPP) into a mixture of isopentenyl diphosphate (IPP) and dimethylallyl diphosphate (DMAPP). Acts in the terminal step of the DOXP/MEP pathway for isoprenoid precursor biosynthesis. Has a higher activity compared with LytB2. Is essential for M.tuberculosis growth in vitro. The protein is 4-hydroxy-3-methylbut-2-enyl diphosphate reductase 2 of Mycobacterium tuberculosis (strain ATCC 25618 / H37Rv).